A 311-amino-acid chain; its full sequence is Pyrimidine-specific ribonucleoside hydrolase RihA (311 aa).

Histidine 240 is an active-site residue.

The protein belongs to the IUNH family. RihA subfamily.

Its function is as follows. Hydrolyzes with equal efficiency cytidine or uridine to ribose and cytosine or uracil, respectively. This Escherichia coli (strain SMS-3-5 / SECEC) protein is Pyrimidine-specific ribonucleoside hydrolase RihA.